The primary structure comprises 90 residues: UPF0335 protein RPA4190 (90 aa).

This sequence belongs to the UPF0335 family.

The sequence is that of UPF0335 protein RPA4190 from Rhodopseudomonas palustris (strain ATCC BAA-98 / CGA009).